We begin with the raw amino-acid sequence, 313 residues long: Catalase-related peroxidase (313 aa).

Histidine 28 is a catalytic residue. Tyrosine 294 lines the heme pocket.

The protein belongs to the catalase family. Monomer. Heme serves as cofactor.

Has an organic peroxide-dependent peroxidase activity. Exhibits strong peroxidase activity using organic hydroperoxides as cosubstrates, weak peroxidase activity using hydrogen peroxide and negligible catalase activity. May have a role in elimination of reactive oxygen species, in particular by deactivating hydroperoxides. This Mycolicibacterium paratuberculosis (strain ATCC BAA-968 / K-10) (Mycobacterium paratuberculosis) protein is Catalase-related peroxidase.